A 96-amino-acid polypeptide reads, in one-letter code: Large ribosomal subunit protein bL28 (96 aa).

Residues 1-22 (MSRSCELTGKGVQSGNNVSHAN) show a composition bias toward polar residues. Residues 1 to 24 (MSRSCELTGKGVQSGNNVSHANNK) are disordered.

It belongs to the bacterial ribosomal protein bL28 family.

This is Large ribosomal subunit protein bL28 from Sinorhizobium medicae (strain WSM419) (Ensifer medicae).